Here is a 177-residue protein sequence, read N- to C-terminus: Large ribosomal subunit protein uL6 (177 aa).

It belongs to the universal ribosomal protein uL6 family. As to quaternary structure, part of the 50S ribosomal subunit.

In terms of biological role, this protein binds to the 23S rRNA, and is important in its secondary structure. It is located near the subunit interface in the base of the L7/L12 stalk, and near the tRNA binding site of the peptidyltransferase center. The protein is Large ribosomal subunit protein uL6 of Sphingopyxis alaskensis (strain DSM 13593 / LMG 18877 / RB2256) (Sphingomonas alaskensis).